The following is a 230-amino-acid chain: MIEYIIGALGLIIASVQDFRSREIEDYIWIFLAVFGVLFAIYSSITLLDYSILINSISGFVICFILGYMMFLSGIGGGDGKMLIGLGALVPKFQMPIYTSLGTLLNLNYVPTFPIMVFINGIFFMVFLPFVILFRNILNGARPKTGKEFILMFFGEKMKVNVAKEQKRLIMGQNDKINFFPAADDEDFSKYSNNEEIWVTPQIPLIIPITLSYLVTPIIGDRILDFLIPF.

Residue Met-1 is a topological domain, cytoplasmic. A helical transmembrane segment spans residues 2 to 18 (IEYIIGALGLIIASVQD). The Extracellular segment spans residues 19-23 (FRSRE). Residues 24 to 46 (IEDYIWIFLAVFGVLFAIYSSIT) form a helical membrane-spanning segment. Over 47–49 (LLD) the chain is Cytoplasmic. A helical membrane pass occupies residues 50–72 (YSILINSISGFVICFILGYMMFL). Topologically, residues 73 to 78 (SGIGGG) are extracellular. Residues 79–89 (DGKMLIGLGAL) form a helical membrane-spanning segment. Topologically, residues 90-110 (VPKFQMPIYTSLGTLLNLNYV) are cytoplasmic. Residues 111–139 (PTFPIMVFINGIFFMVFLPFVILFRNILN) traverse the membrane as a helical segment. Residues 140–204 (GARPKTGKEF…EEIWVTPQIP (65 aa)) lie on the Extracellular side of the membrane. A helical transmembrane segment spans residues 205–216 (LIIPITLSYLVT). Residues 217–230 (PIIGDRILDFLIPF) are Cytoplasmic-facing.

It belongs to the peptidase A24 family. Archaeal preflagellin peptidase subfamily.

It localises to the cell membrane. It catalyses the reaction Cleaves the signal peptide of 3 to 12 amino acids from the N-terminal of preflagellin, usually at Arg-Gly-|- or Lys-Gly-|-, to release flagellin.. In terms of biological role, cleaves the N-terminal leader peptide from preflagellins. The chain is Preflagellin peptidase (flaK) from Methanococcus maripaludis (strain C6 / ATCC BAA-1332).